The following is a 343-amino-acid chain: Tryptophan--tRNA ligase (343 aa).

ATP-binding positions include 15 to 17 (QPT) and 24 to 25 (GN). Positions 16-25 (PTSDSLHLGN) match the 'HIGH' region motif. D145 is an L-tryptophan binding site. Residues 157–159 (GED), I196, and 205–209 (KMSKS) contribute to the ATP site. Residues 205–209 (KMSKS) carry the 'KMSKS' region motif.

The protein belongs to the class-I aminoacyl-tRNA synthetase family. As to quaternary structure, homodimer.

It is found in the cytoplasm. It catalyses the reaction tRNA(Trp) + L-tryptophan + ATP = L-tryptophyl-tRNA(Trp) + AMP + diphosphate + H(+). Catalyzes the attachment of tryptophan to tRNA(Trp). This is Tryptophan--tRNA ligase from Mycobacterium leprae (strain TN).